The chain runs to 648 residues: 5-aminolevulinate synthase, mitochondrial (648 aa).

The transit peptide at 1-26 (MEALLQQSRAMCPFLKRSSPNTLRSL) directs the protein to the mitochondrion. Positions 69 to 109 (KRFTSSAAGVPGAGAGTPKPTRGSPGKRALHSTGGNGANMS) are disordered. Substrate contacts are provided by Arg-170, Ser-283, and Lys-302. Ser-335, His-363, and Thr-409 together coordinate pyridoxal 5'-phosphate. Lys-412 is an active-site residue. Lys-412 carries the N6-(pyridoxal phosphate)lysine modification. Pyridoxal 5'-phosphate is bound by residues Thr-441 and Thr-442. A substrate-binding site is contributed by Thr-527.

Belongs to the class-II pyridoxal-phosphate-dependent aminotransferase family. Homodimer. Pyridoxal 5'-phosphate is required as a cofactor.

The protein localises to the mitochondrion matrix. The catalysed reaction is succinyl-CoA + glycine + H(+) = 5-aminolevulinate + CO2 + CoA. Its pathway is porphyrin-containing compound metabolism; protoporphyrin-IX biosynthesis; 5-aminolevulinate from glycine: step 1/1. Its function is as follows. Catalyzes the synthesis of 5-aminolevulinate (ALA) from succinyl-CoA and glycine, the first and rate-limiting step in heme biosynthesis. This chain is 5-aminolevulinate synthase, mitochondrial (hemA), found in Emericella nidulans (strain FGSC A4 / ATCC 38163 / CBS 112.46 / NRRL 194 / M139) (Aspergillus nidulans).